A 491-amino-acid polypeptide reads, in one-letter code: Angiopoietin-related protein 1 (491 aa).

The first 23 residues, 1 to 23 (MKTFTWTLGVLFFLLVDTGHCRG), serve as a signal peptide directing secretion. A coiled-coil region spans residues 80-168 (ITRMDLENLK…LNVTTEMLKM (89 aa)). N-linked (GlcNAc...) asparagine glycans are attached at residues Asn-160 and Asn-188. The Fibrinogen C-terminal domain maps to 271-491 (FINEGPFKDC…AVQMMIKPID (221 aa)). Intrachain disulfides connect Cys-280–Cys-309 and Cys-432–Cys-445.

In terms of tissue distribution, highly expressed in adrenal gland, placenta, thyroid gland, heart, skeletal muscle and small intestine. Weakly expressed in testis, ovary, colon, pancreas, kidney and stomach.

The protein localises to the secreted. The sequence is that of Angiopoietin-related protein 1 (ANGPTL1) from Homo sapiens (Human).